The primary structure comprises 216 residues: Deoxyribose-phosphate aldolase (216 aa).

The Proton donor/acceptor role is filled by Asp-89. Lys-152 (schiff-base intermediate with acetaldehyde) is an active-site residue. Lys-181 serves as the catalytic Proton donor/acceptor.

The protein belongs to the DeoC/FbaB aldolase family. DeoC type 1 subfamily.

It localises to the cytoplasm. The enzyme catalyses 2-deoxy-D-ribose 5-phosphate = D-glyceraldehyde 3-phosphate + acetaldehyde. Its pathway is carbohydrate degradation; 2-deoxy-D-ribose 1-phosphate degradation; D-glyceraldehyde 3-phosphate and acetaldehyde from 2-deoxy-alpha-D-ribose 1-phosphate: step 2/2. Catalyzes a reversible aldol reaction between acetaldehyde and D-glyceraldehyde 3-phosphate to generate 2-deoxy-D-ribose 5-phosphate. This Clostridium tetani (strain Massachusetts / E88) protein is Deoxyribose-phosphate aldolase.